Reading from the N-terminus, the 116-residue chain is SPbeta prophage-derived uncharacterized protein YomQ (116 aa).

In Bacillus subtilis (strain 168), this protein is SPbeta prophage-derived uncharacterized protein YomQ (yomQ).